A 558-amino-acid polypeptide reads, in one-letter code: N-terminal histidine N-methyltransferase (558 aa).

Residues 1–15 (MAPFRSIYEKDATKK) are Cytoplasmic-facing. A helical transmembrane segment spans residues 16–32 (LVVGAALLVLAAFYSYV). Residues 33 to 49 (FLLTLAPVYGSTPSHIF) lie on the Lumenal side of the membrane. A helical membrane pass occupies residues 50–65 (HGYGVGIAGVAGWFSK). Residues 66–77 (DIVDRVSGRKAI) are Cytoplasmic-facing. Residues 78–96 (YAIPVLAFFLPVVQYFVSQ) traverse the membrane as a helical segment. Residues 97 to 104 (QSSALGNP) lie on the Lumenal side of the membrane. The chain crosses the membrane as a helical span at residues 105–131 (AGPIFTEVLALYPLVLLSVACAGKLVQ). Over 132-145 (AGLNLQRHGDLVAE) the chain is Cytoplasmic. A helical transmembrane segment spans residues 146 to 169 (HIPLLGSYVIYSAGEHLIKAFLSR). Residues 170 to 172 (FIG) are Lumenal-facing. A helical membrane pass occupies residues 173 to 194 (STVLLSRAGLQILIAIFYAAAV). The Cytoplasmic portion of the chain corresponds to 195–197 (PSK). The chain crosses the membrane as a helical span at residues 198–215 (ALLLAIPAFLFSVTSNTH). The Lumenal segment spans residues 216 to 558 (LPLGHTTTAL…VLPDRVWEGW (343 aa)).

Belongs to the methyltransferase superfamily.

The protein localises to the endoplasmic reticulum membrane. The catalysed reaction is L-histidyl-[protein] + S-adenosyl-L-methionine = N(tele)-methyl-L-histidyl-[protein] + S-adenosyl-L-homocysteine + H(+). Protein-histidine N-methyltransferase that specifically mediates 3-methylhistidine (tele-methylhistidine) methylation at 'His-1', which protects the side-chain from oxidative damage. Methylates lytic polysaccharide monooxygenases (LPMOs) destined for secretion, including AN4702. This chain is N-terminal histidine N-methyltransferase, found in Emericella nidulans (strain FGSC A4 / ATCC 38163 / CBS 112.46 / NRRL 194 / M139) (Aspergillus nidulans).